The primary structure comprises 230 residues: 5'-methylthioadenosine/S-adenosylhomocysteine nucleosidase (230 aa).

E12 acts as the Proton acceptor in catalysis. Substrate-binding positions include G78, M153, and 174–175 (ME). The active-site Proton donor is the D198.

The protein belongs to the PNP/UDP phosphorylase family. MtnN subfamily.

It carries out the reaction S-adenosyl-L-homocysteine + H2O = S-(5-deoxy-D-ribos-5-yl)-L-homocysteine + adenine. The catalysed reaction is S-methyl-5'-thioadenosine + H2O = 5-(methylsulfanyl)-D-ribose + adenine. It catalyses the reaction 5'-deoxyadenosine + H2O = 5-deoxy-D-ribose + adenine. Its pathway is amino-acid biosynthesis; L-methionine biosynthesis via salvage pathway; S-methyl-5-thio-alpha-D-ribose 1-phosphate from S-methyl-5'-thioadenosine (hydrolase route): step 1/2. Catalyzes the irreversible cleavage of the glycosidic bond in both 5'-methylthioadenosine (MTA) and S-adenosylhomocysteine (SAH/AdoHcy) to adenine and the corresponding thioribose, 5'-methylthioribose and S-ribosylhomocysteine, respectively. Also cleaves 5'-deoxyadenosine, a toxic by-product of radical S-adenosylmethionine (SAM) enzymes, into 5-deoxyribose and adenine. The chain is 5'-methylthioadenosine/S-adenosylhomocysteine nucleosidase from Aeromonas salmonicida (strain A449).